The sequence spans 225 residues: uncharacterized protein (225 aa).

The region spanning 114 to 219 (DAEAIIMQVY…RLSVTMRRII (106 aa)) is the Fe2OG dioxygenase domain.

This sequence belongs to the iron/ascorbate-dependent oxidoreductase family.

It localises to the cytoplasm. The protein resides in the nucleus. This is an uncharacterized protein from Schizosaccharomyces pombe (strain 972 / ATCC 24843) (Fission yeast).